The following is a 195-amino-acid chain: Peroxiredoxin (195 aa).

The Thioredoxin domain occupies 4–162; it reads AMIGKPAPEF…TLRLVQAFQF (159 aa). The Cysteine sulfenic acid (-SOH) intermediate role is filled by Cys-49.

This sequence belongs to the peroxiredoxin family. AhpC/Prx1 subfamily. Homodimer; disulfide-linked, upon oxidation.

The catalysed reaction is a hydroperoxide + [thioredoxin]-dithiol = an alcohol + [thioredoxin]-disulfide + H2O. In terms of biological role, thiol-specific peroxidase that catalyzes the reduction of hydrogen peroxide and organic hydroperoxides to water and alcohols, respectively. Plays a role in cell protection against oxidative stress by detoxifying peroxides and as sensor of hydrogen peroxide-mediated signaling events. This chain is Peroxiredoxin, found in Ascaris suum (Pig roundworm).